We begin with the raw amino-acid sequence, 314 residues long: MTQVLPSGLVASAVVAASSANLGPGFDSLGLALSLYDEIVLETTDSGLEVVVEGEGAGQVPLNSEHLVVRAIQHGLRAVGVPATGLIVRCRNDIPHSRGLGSSASAVVGGLAAVNGLVSQAGWVPLSDQQLIQLSSEFEGHPDNAAAAVLGGAVVSWIERCGDRADYSAVQLDLHPDIHLFSAIPEVRSSTAETRVLLPDLVSHDDARFNISRAALLVVALTQRPDLLMAATEDVLHQPQRASAMPASAEYLQLLRRHKVAATLSGAGPALIALTTNPDLPPEAVEYGAANGFTITAMTAGDRVRWKPGVAFSD.

95-105 (PHSRGLGSSAS) provides a ligand contact to ATP.

This sequence belongs to the GHMP kinase family. Homoserine kinase subfamily.

The protein localises to the cytoplasm. The catalysed reaction is L-homoserine + ATP = O-phospho-L-homoserine + ADP + H(+). The protein operates within amino-acid biosynthesis; L-threonine biosynthesis; L-threonine from L-aspartate: step 4/5. Catalyzes the ATP-dependent phosphorylation of L-homoserine to L-homoserine phosphate. This is Homoserine kinase from Mycobacterium ulcerans (strain Agy99).